The following is a 430-amino-acid chain: Histidine--tRNA ligase, chloroplastic (430 aa).

This sequence belongs to the class-II aminoacyl-tRNA synthetase family.

It is found in the plastid. Its subcellular location is the chloroplast. It carries out the reaction tRNA(His) + L-histidine + ATP = L-histidyl-tRNA(His) + AMP + diphosphate + H(+). In Pyropia yezoensis (Susabi-nori), this protein is Histidine--tRNA ligase, chloroplastic.